Consider the following 640-residue polypeptide: MSAGYRSMAISASDRERGQQSMAMLVLAALGVVYGDLGTSPLYALQEAFNGDHGVRPTPDNVVGVVSLFLWSLILMVSVKYVMVLMRADNKGEGGILALLAQITGGRSGDGRRVAVGWVLLGLAGAAMLYGDGVITPAVSVLSAMEGLQVATPALAAYVVPATVVILAMLFMIQPFGSGRVGAAFGPILAAWFVAIAALGLAQLWRNPAILQAVNPWHGIAYFQRNGFAGFVSLGAVVLCLTGAEALYADMGHFGARPIRLAWYGLALPALILSYLGQGALLLAHPQLSGRPFYSMVPEWGLLPMVALSTLATIVASQALITAVFSLTHQSAQLGFFPRVKVLHTSGSHKGQIYLPLLNWTLMLATIAVVLGFRESGKLAAAFGLAVSTTMAITTVLFAVLARRRWHWPWWAVALVAGSLFAIDLAFWLANALKFLDGGWLPLLLGLAVFCVMGCWFGGRRLQMRESRGRQLPLEALLSSLGMNPVARIPGVGVFLSERADGTPLVLLHHLKHNQALHETAILLTLQMLDVPRAAGERVSAQWLGQGMARVTARYGYMEEPDVPEAMARAAEALGLPPLEPLSTSYYLGRQTLVAAPGSGGLKRWLVGVFAFLRQNERSATLYFGLPPNRVVELGARIEL.

Transmembrane regions (helical) follow at residues 25-45, 65-85, 115-135, 153-173, 181-201, 227-247, 263-283, 305-325, 353-373, 381-401, 410-430, and 438-458; these read LVLA…LYAL, VVSL…VMVL, AVGW…DGVI, PALA…LFMI, VGAA…ALGL, GFAG…AEAL, WYGL…ALLL, MVAL…TAVF, IYLP…VLGF, AAFG…FAVL, WWAV…FWLA, and GGWL…CWFG.

Belongs to the HAK/KUP transporter (TC 2.A.72) family.

Its subcellular location is the cell inner membrane. The enzyme catalyses K(+)(in) + H(+)(in) = K(+)(out) + H(+)(out). In terms of biological role, transport of potassium into the cell. Likely operates as a K(+):H(+) symporter. This Chromobacterium violaceum (strain ATCC 12472 / DSM 30191 / JCM 1249 / CCUG 213 / NBRC 12614 / NCIMB 9131 / NCTC 9757 / MK) protein is Probable potassium transport system protein Kup 1.